Consider the following 157-residue polypeptide: Urease accessory protein UreE (157 aa).

It belongs to the UreE family.

The protein resides in the cytoplasm. In terms of biological role, involved in urease metallocenter assembly. Binds nickel. Probably functions as a nickel donor during metallocenter assembly. The chain is Urease accessory protein UreE from Corynebacterium glutamicum (strain R).